The primary structure comprises 493 residues: Keratin, type II cuticular Hb3 (493 aa).

A head region spans residues 1 to 111; it reads MTCGFNSIGC…PNAQCVKQEE (111 aa). Residues 111-422 form the IF rod domain; the sequence is EKEQIKSLNS…RLLEGEEQRL (312 aa). The tract at residues 112–146 is coil 1A; the sequence is KEQIKSLNSRFAAFIDKVRFLEQQNKLLETKLQFY. The tract at residues 147–156 is linker 1; sequence QNRECCQSNL. The segment at 157–257 is coil 1B; sequence EPLFAGYIET…YEEEIRILQS (101 aa). Lys217 is covalently cross-linked (Glycyl lysine isopeptide (Lys-Gly) (interchain with G-Cter in SUMO1)). The interval 258–274 is linker 12; sequence HISDTSVVVKLDNSRDL. The tract at residues 275 to 418 is coil 2; it reads NMDCIVAEIK…ATYRRLLEGE (144 aa). Residues 419 to 493 are tail; sequence EQRLCEGVEA…GGGSCGQGRH (75 aa).

The protein belongs to the intermediate filament family. In terms of assembly, heterotetramer of two type I and two type II keratins. In terms of tissue distribution, synthesis begins in the cortex 10-15 cell layers above the apex of the dermal papilla and ends abruptly in the middle of the cortex.

This Homo sapiens (Human) protein is Keratin, type II cuticular Hb3 (KRT83).